We begin with the raw amino-acid sequence, 404 residues long: Lissencephaly-1 homolog (404 aa).

A LisH domain is found at 7–39; it reads QKEEINRAIAEYMQNNGYSESFSVFLKESSLSE. Positions 54 to 81 form a coiled coil; that stretch reads TTVLRLQRKVNDLESKLQESQREINHGA. A compositionally biased stretch (basic and acidic residues) spans 69-89; it reads KLQESQREINHGAPTRDKRQA. The disordered stretch occupies residues 69-90; that stretch reads KLQESQREINHGAPTRDKRQAA. WD repeat units follow at residues 104–145, 146–185, 189–228, 231–270, 273–327, 330–369, and 372–404; these read GHRL…RTLK, GHTD…DCLK, GHEH…CVYT, GHND…AKLV, DHEH…VLFT, AHEN…CMKA, and AHEH…WECR.

The protein belongs to the WD repeat LIS1/nudF family. Component of a dynein-regulating complex composed of at least lis-1 and nud-2. Interacts with nud-2; the interaction is direct. As to expression, expressed in all classes of neurons in the ventral cord. Expressed in the multinucleate spermathecal valves and adult seam cells.

The protein localises to the cytoplasm. Its subcellular location is the cytoskeleton. It localises to the microtubule organizing center. It is found in the centrosome. The protein resides in the chromosome. The protein localises to the centromere. Its subcellular location is the kinetochore. It localises to the nucleus envelope. Functionally, positively regulates the activity of the minus-end directed microtubule motor protein dynein. May enhance dynein-mediated microtubule sliding by targeting dynein to the microtubule plus end. Required for several dynein- and microtubule-dependent processes such as nuclear migration during cell division. Part of a complex with nud-2, which is recruited to the nuclear envelope by unc-83, where, in turn, it recruits dynein to the nuclear surface and regulates nuclear migration in hypodermal precursor cells. Plays a role in GABAergic synaptic vesicle localization in the ventral nerve cord. Required for neuronal cell differentiation. The sequence is that of Lissencephaly-1 homolog from Caenorhabditis elegans.